Here is a 485-residue protein sequence, read N- to C-terminus: Betaine aldehyde dehydrogenase (485 aa).

3 residues coordinate K(+): Thr-23, Ile-24, and Asp-90. 147-149 serves as a coordination point for NAD(+); sequence GAW. Lys-159 functions as the Charge relay system in the catalytic mechanism. NAD(+) is bound by residues 173–176 and 226–229; these read KPSE and EVGT. Leu-241 lines the K(+) pocket. Glu-247 serves as the catalytic Proton acceptor. NAD(+) contacts are provided by Gly-249, Cys-281, and Glu-382. Cys-281 functions as the Nucleophile in the catalytic mechanism. A Cysteine sulfenic acid (-SOH) modification is found at Cys-281. Lys-452 and Gly-455 together coordinate K(+). Glu-459 functions as the Charge relay system in the catalytic mechanism.

It belongs to the aldehyde dehydrogenase family. Dimer of dimers. It depends on K(+) as a cofactor.

The enzyme catalyses betaine aldehyde + NAD(+) + H2O = glycine betaine + NADH + 2 H(+). It participates in amine and polyamine biosynthesis; betaine biosynthesis via choline pathway; betaine from betaine aldehyde: step 1/1. Functionally, involved in the biosynthesis of the osmoprotectant glycine betaine. Catalyzes the irreversible oxidation of betaine aldehyde to the corresponding acid. The protein is Betaine aldehyde dehydrogenase of Marinomonas sp. (strain MWYL1).